Reading from the N-terminus, the 690-residue chain is BURP domain-containing protein 14 (690 aa).

The first 26 residues, 1-26 (MAPPRHARLVAATIAVLLCHLPRSAA), serve as a signal peptide directing secretion. Residues 134 to 163 (GSSWSKSSSDGDGAAAAAAPAGGGGGGGGG) form a disordered region. Positions 135–153 (SSWSKSSSDGDGAAAAAAP) are enriched in low complexity. Residues 154–163 (AGGGGGGGGG) show a composition bias toward gly residues. A glycan (N-linked (GlcNAc...) asparagine) is linked at Asn-178. The segment covering 201 to 211 (SNGGGGGGGGV) has biased composition (gly residues). The disordered stretch occupies residues 201 to 232 (SNGGGGGGGGVDSFRRYGKGSQGRNDSFTSYE). N-linked (GlcNAc...) asparagine glycans are attached at residues Asn-225, Asn-317, Asn-379, Asn-432, Asn-450, and Asn-601. Residues 477–689 (FFRERDLVAG…FQGDMTWTVA (213 aa)) form the BURP domain.

Expressed in panicles.

The sequence is that of BURP domain-containing protein 14 (BURP14) from Oryza sativa subsp. japonica (Rice).